A 464-amino-acid chain; its full sequence is Macrophage metalloelastase (464 aa).

The N-terminal stretch at 1-17 (MKFLLLILTLWVTSSGA) is a signal peptide. A propeptide spans 18-100 (DPLKENDMLF…DVYHFKTMPG (83 aa)) (activation peptide). N-linked (GlcNAc...) asparagine glycosylation is present at N69. The Cysteine switch signature appears at 85-92 (PRCGVPDV). Position 87 (C87) interacts with Zn(2+). Residues D119 and D153 each contribute to the Ca(2+) site. Zn(2+)-binding residues include H163 and D165. Ca(2+)-binding residues include D170, G171, G173, and V175. Zn(2+) is bound at residue H178. 3 residues coordinate Ca(2+): G185, G187, and D189. H191 is a binding site for Zn(2+). The Ca(2+) site is built by D193, E194, and E196. Residue H213 participates in Zn(2+) binding. E214 is an active-site residue. Positions 217 and 223 each coordinate Zn(2+). Hemopexin repeat units follow at residues 274–323 (PTAC…WPTL), 324–370 (PSGI…GFPD), 372–420 (VKKI…FPGI), and 421–464 (GPKI…WFDC). An intrachain disulfide couples C277 to C464. D284, E328, D376, and D425 together coordinate Ca(2+).

The protein belongs to the peptidase M10A family. Ca(2+) serves as cofactor. It depends on Zn(2+) as a cofactor.

The protein localises to the secreted. It is found in the extracellular space. The protein resides in the extracellular matrix. The catalysed reaction is Hydrolysis of soluble and insoluble elastin. Specific cleavages are also produced at 14-Ala-|-Leu-15 and 16-Tyr-|-Leu-17 in the B chain of insulin.. Functionally, may be involved in tissue injury and remodeling. Has significant elastolytic activity. Can accept large and small amino acids at the P1' site, but has a preference for leucine. Aromatic or hydrophobic residues are preferred at the P1 site, with small hydrophobic residues (preferably alanine) occupying P3. This is Macrophage metalloelastase (MMP12) from Oryctolagus cuniculus (Rabbit).